The sequence spans 363 residues: Phosphoribosylformylglycinamidine cyclo-ligase (363 aa).

Belongs to the AIR synthase family.

The protein resides in the cytoplasm. The catalysed reaction is 2-formamido-N(1)-(5-O-phospho-beta-D-ribosyl)acetamidine + ATP = 5-amino-1-(5-phospho-beta-D-ribosyl)imidazole + ADP + phosphate + H(+). Its pathway is purine metabolism; IMP biosynthesis via de novo pathway; 5-amino-1-(5-phospho-D-ribosyl)imidazole from N(2)-formyl-N(1)-(5-phospho-D-ribosyl)glycinamide: step 2/2. This is Phosphoribosylformylglycinamidine cyclo-ligase from Parvibaculum lavamentivorans (strain DS-1 / DSM 13023 / NCIMB 13966).